A 579-amino-acid polypeptide reads, in one-letter code: Proline--tRNA ligase (579 aa).

Belongs to the class-II aminoacyl-tRNA synthetase family. ProS type 1 subfamily. Homodimer.

It localises to the cytoplasm. It carries out the reaction tRNA(Pro) + L-proline + ATP = L-prolyl-tRNA(Pro) + AMP + diphosphate. Catalyzes the attachment of proline to tRNA(Pro) in a two-step reaction: proline is first activated by ATP to form Pro-AMP and then transferred to the acceptor end of tRNA(Pro). As ProRS can inadvertently accommodate and process non-cognate amino acids such as alanine and cysteine, to avoid such errors it has two additional distinct editing activities against alanine. One activity is designated as 'pretransfer' editing and involves the tRNA(Pro)-independent hydrolysis of activated Ala-AMP. The other activity is designated 'posttransfer' editing and involves deacylation of mischarged Ala-tRNA(Pro). The misacylated Cys-tRNA(Pro) is not edited by ProRS. In Chlamydia muridarum (strain MoPn / Nigg), this protein is Proline--tRNA ligase.